A 109-amino-acid chain; its full sequence is UPF0122 protein CLL_A1244 (109 aa).

It belongs to the UPF0122 family.

Might take part in the signal recognition particle (SRP) pathway. This is inferred from the conservation of its genetic proximity to ftsY/ffh. May be a regulatory protein. The polypeptide is UPF0122 protein CLL_A1244 (Clostridium botulinum (strain Eklund 17B / Type B)).